The following is an 84-amino-acid chain: Small ribosomal subunit protein bS20 (84 aa).

This sequence belongs to the bacterial ribosomal protein bS20 family.

Functionally, binds directly to 16S ribosomal RNA. This chain is Small ribosomal subunit protein bS20, found in Bacteroides thetaiotaomicron (strain ATCC 29148 / DSM 2079 / JCM 5827 / CCUG 10774 / NCTC 10582 / VPI-5482 / E50).